Consider the following 146-residue polypeptide: Hemoglobin subunit beta-2 (146 aa).

The 145-residue stretch at glutamate 2–histidine 146 folds into the Globin domain. Heme b is bound by residues histidine 63 and histidine 92.

The protein belongs to the globin family. Hb2 is a heterotetramer of two alpha chains and two beta-2 chains. As to expression, red blood cells.

Its function is as follows. Involved in oxygen transport from gills to the various peripheral tissues. The sequence is that of Hemoglobin subunit beta-2 (hbb2) from Cygnodraco mawsoni (Antarctic dragonfish).